A 437-amino-acid chain; its full sequence is Enolase 1 (437 aa).

Residue Lys60 forms a Glycyl lysine isopeptide (Lys-Gly) (interchain with G-Cter in ubiquitin) linkage. 2 positions are modified to phosphoserine: Ser119 and Ser138. His160 and Glu169 together coordinate substrate. Ser188 carries the post-translational modification Phosphoserine. Glu212 acts as the Proton donor in catalysis. A Glycyl lysine isopeptide (Lys-Gly) (interchain with G-Cter in ubiquitin) cross-link involves residue Lys243. Mg(2+) contacts are provided by Asp247 and Glu296. Glu296 is a substrate binding site. A Phosphothreonine modification is found at Thr313. Asp321 provides a ligand contact to substrate. Asp321 contacts Mg(2+). Thr324 bears the Phosphothreonine mark. Catalysis depends on Lys346, which acts as the Proton acceptor. Residue Lys358 forms a Glycyl lysine isopeptide (Lys-Gly) (interchain with G-Cter in ubiquitin) linkage. Residues Ser373–Ser376 and Lys397 contribute to the substrate site.

This sequence belongs to the enolase family. As to quaternary structure, homodimer. It depends on Mg(2+) as a cofactor.

It localises to the cytoplasm. The catalysed reaction is (2R)-2-phosphoglycerate = phosphoenolpyruvate + H2O. It participates in carbohydrate degradation; glycolysis; pyruvate from D-glyceraldehyde 3-phosphate: step 4/5. This Saccharomyces cerevisiae (strain ATCC 204508 / S288c) (Baker's yeast) protein is Enolase 1 (ENO1).